Here is a 97-residue protein sequence, read N- to C-terminus: Exodeoxyribonuclease 7 small subunit (97 aa).

Residues 1 to 21 form a disordered region; it reads MAKTATPGACASDPGSGPLPE.

This sequence belongs to the XseB family. Heterooligomer composed of large and small subunits.

Its subcellular location is the cytoplasm. It carries out the reaction Exonucleolytic cleavage in either 5'- to 3'- or 3'- to 5'-direction to yield nucleoside 5'-phosphates.. Bidirectionally degrades single-stranded DNA into large acid-insoluble oligonucleotides, which are then degraded further into small acid-soluble oligonucleotides. This Burkholderia mallei (strain NCTC 10247) protein is Exodeoxyribonuclease 7 small subunit.